We begin with the raw amino-acid sequence, 63 residues long: Ct-IT2 (63 aa).

Residues 1–63 enclose the LCN-type CS-alpha/beta domain; it reads KDGYPMDSKG…VWDKATNKCG (63 aa). 4 disulfide bridges follow: cysteine 11-cysteine 62, cysteine 15-cysteine 36, cysteine 22-cysteine 43, and cysteine 26-cysteine 45. The residue at position 63 (glycine 63) is a Glycine amide.

In terms of tissue distribution, expressed by the venom gland.

It localises to the secreted. In terms of biological role, beta toxins bind voltage-independently at site-4 of sodium channels (Nav) and shift the voltage of activation toward more negative potentials thereby affecting sodium channel activation and promoting spontaneous and repetitive firing. Is highly active on insects, since it provokes paralysis and death when injected into crickets. The chain is Ct-IT2 from Centruroides tecomanus (Scorpion).